A 337-amino-acid polypeptide reads, in one-letter code: MLEKFERYPLTFGPTPIERLGRLSAHLGGQVELYAKREDCNSGLAFGGNKLRKLEYIVPDAIASGADTLVSIGGVQSNHTRMVAAVAAKIGMKCRLVQEAWVPHEDAVYDRVGNIMLSRILGADVRLVDDGFDIGIRSSWQEAIDDVKAKGGRPYAIPAGASVHKFGGLGYVGFAEEVRAQERDLGFTFDYIVVCTVTGSTHAGMVVGFAKDGRERRVIGIDASATPAQTKAQVLDIARRTADLVGLGRDLSADDVVLNEDYAYPVYGVPSQETKDAIRLCARLEGMITDPVYEGKSMQGMIDLVRKGFFPAGSKVLYAHLGGAPALNGYGYTFRNG.

Lys50 carries the N6-(pyridoxal phosphate)lysine modification. The Nucleophile role is filled by Ser77.

It belongs to the ACC deaminase/D-cysteine desulfhydrase family. In terms of assembly, homotrimer. Pyridoxal 5'-phosphate is required as a cofactor.

The catalysed reaction is 1-aminocyclopropane-1-carboxylate + H2O = 2-oxobutanoate + NH4(+). Functionally, catalyzes a cyclopropane ring-opening reaction, the irreversible conversion of 1-aminocyclopropane-1-carboxylate (ACC) to ammonia and alpha-ketobutyrate. Allows growth on ACC as a nitrogen source. This is 1-aminocyclopropane-1-carboxylate deaminase from Methylobacterium nodulans (strain LMG 21967 / CNCM I-2342 / ORS 2060).